Here is a 161-residue protein sequence, read N- to C-terminus: Putative 4-hydroxy-4-methyl-2-oxoglutarate aldolase (161 aa).

Residues 75–78 (GDQL) and Arg97 contribute to the substrate site. Asp98 serves as a coordination point for a divalent metal cation.

It belongs to the class II aldolase/RraA-like family. In terms of assembly, homotrimer. A divalent metal cation is required as a cofactor.

The enzyme catalyses 4-hydroxy-4-methyl-2-oxoglutarate = 2 pyruvate. It carries out the reaction oxaloacetate + H(+) = pyruvate + CO2. In terms of biological role, catalyzes the aldol cleavage of 4-hydroxy-4-methyl-2-oxoglutarate (HMG) into 2 molecules of pyruvate. Also contains a secondary oxaloacetate (OAA) decarboxylase activity due to the common pyruvate enolate transition state formed following C-C bond cleavage in the retro-aldol and decarboxylation reactions. The protein is Putative 4-hydroxy-4-methyl-2-oxoglutarate aldolase of Vibrio cholerae serotype O1 (strain ATCC 39315 / El Tor Inaba N16961).